Consider the following 352-residue polypeptide: Small ribosomal subunit biogenesis GTPase RsgA (352 aa).

The span at 1–21 (MKKNKLSKNQHRRIQAHHQYR) shows a compositional bias: basic residues. The interval 1-38 (MKKNKLSKNQHRRIQAHHQYRLHPTSLTDDKNNQLDDA) is disordered. Positions 116–278 (FYDGIKPMAA…LIDSPGIREF (163 aa)) constitute a CP-type G domain. GTP is bound by residues 164-167 (NKID) and 218-226 (GQSGVGKSS). Zn(2+) contacts are provided by Cys-302, Cys-307, His-309, and Cys-315.

This sequence belongs to the TRAFAC class YlqF/YawG GTPase family. RsgA subfamily. Monomer. Associates with 30S ribosomal subunit, binds 16S rRNA. Requires Zn(2+) as cofactor.

The protein localises to the cytoplasm. One of several proteins that assist in the late maturation steps of the functional core of the 30S ribosomal subunit. Helps release RbfA from mature subunits. May play a role in the assembly of ribosomal proteins into the subunit. Circularly permuted GTPase that catalyzes slow GTP hydrolysis, GTPase activity is stimulated by the 30S ribosomal subunit. The protein is Small ribosomal subunit biogenesis GTPase RsgA of Hamiltonella defensa subsp. Acyrthosiphon pisum (strain 5AT).